The following is a 79-amino-acid chain: Short neurotoxin 2 (79 aa).

Positions 1 to 19 are cleaved as a signal peptide; it reads PLLLTLVVVTIVCLDLGYT. Cystine bridges form between Cys22-Cys41, Cys36-Cys58, Cys60-Cys71, and Cys72-Cys77.

It belongs to the three-finger toxin family. Short-chain subfamily. Type I alpha-neurotoxin sub-subfamily. As to expression, expressed by the venom gland.

It is found in the secreted. Binds to muscle nicotinic acetylcholine receptor (nAChR) and inhibit acetylcholine from binding to the receptor, thereby impairing neuromuscular transmission. This chain is Short neurotoxin 2, found in Hydrophis cyanocinctus (Asian annulated sea snake).